We begin with the raw amino-acid sequence, 230 residues long: MKKAVILLSGGMDSAVVTAIAQSQGFMVHALSIRYGQRHTSELDAAVRIARALNVVAHKVVDVDLRSIGGSALTDDIEIPDAGGEGIPVTYVPARNTIMLSLALGWAEVIGAADIFCGVNAVDYSGYPDCRPQFITAFETLANLATKVGVEGTQLHVHAPLQFLSKAEIVHEGLLHGVDFGLTVSCYRADVDGRACGRCDACKLRAAGFADAGVVDPTRYMELPCSLLLL.

8–18 (LSGGMDSAVVT) serves as a coordination point for ATP. Residues C186, C196, C199, and C202 each coordinate Zn(2+).

The protein belongs to the QueC family. It depends on Zn(2+) as a cofactor.

The catalysed reaction is 7-carboxy-7-deazaguanine + NH4(+) + ATP = 7-cyano-7-deazaguanine + ADP + phosphate + H2O + H(+). The protein operates within purine metabolism; 7-cyano-7-deazaguanine biosynthesis. In terms of biological role, catalyzes the ATP-dependent conversion of 7-carboxy-7-deazaguanine (CDG) to 7-cyano-7-deazaguanine (preQ(0)). The polypeptide is 7-cyano-7-deazaguanine synthase (Xylella fastidiosa (strain M12)).